We begin with the raw amino-acid sequence, 682 residues long: Histone deacetylase 18 (682 aa).

Residues lysine 59 to glutamate 382 form a histone deacetylase region. Catalysis depends on histidine 191, which acts as the Proton donor/acceptor. Residues aspartate 231, histidine 233, and aspartate 324 each coordinate Zn(2+). The stretch at serine 430–arginine 608 forms a coiled coil.

The protein belongs to the histone deacetylase family. HD type 2 subfamily. The cofactor is Zn(2+). Expressed in roots, stems, young rosette leaves, flowers and siliques.

The protein resides in the nucleus. The protein localises to the cytoplasm. The enzyme catalyses N(6)-acetyl-L-lysyl-[histone] + H2O = L-lysyl-[histone] + acetate. Its function is as follows. Responsible for the deacetylation of lysine residues on the N-terminal part of the core histones (H2A, H2B, H3 and H4). Histone deacetylation gives a tag for epigenetic repression and plays an important role in transcriptional regulation, cell cycle progression and developmental events. Histone deacetylases act via the formation of large multiprotein complexes. Required for appropriate cellular patterning in the root epidermis. Involved in the differentiation of hair and non-hair cells in the root epidermis. Is not directly involved in the regulation of the expression of pattern genes. Regulates the transcription of certain kinase genes, which are components of a positional information relay system, by changing their histone acetylation status. The protein is Histone deacetylase 18 of Arabidopsis thaliana (Mouse-ear cress).